The following is a 201-amino-acid chain: Recombination protein RecR (201 aa).

A C4-type zinc finger spans residues 60-75 (CSVCGNVDSCDPCTIC). Residues 83 to 178 (STLIVVETVG…RTTRLAHGVP (96 aa)) form the Toprim domain.

This sequence belongs to the RecR family.

Its function is as follows. May play a role in DNA repair. It seems to be involved in an RecBC-independent recombinational process of DNA repair. It may act with RecF and RecO. This chain is Recombination protein RecR, found in Methylocella silvestris (strain DSM 15510 / CIP 108128 / LMG 27833 / NCIMB 13906 / BL2).